The primary structure comprises 128 residues: Sulfurtransferase TusD (128 aa).

C78 acts as the Cysteine persulfide intermediate in catalysis.

This sequence belongs to the DsrE/TusD family. As to quaternary structure, heterohexamer, formed by a dimer of trimers. The hexameric TusBCD complex contains 2 copies each of TusB, TusC and TusD. The TusBCD complex interacts with TusE.

Its subcellular location is the cytoplasm. In terms of biological role, part of a sulfur-relay system required for 2-thiolation of 5-methylaminomethyl-2-thiouridine (mnm(5)s(2)U) at tRNA wobble positions. Accepts sulfur from TusA and transfers it in turn to TusE. This Enterobacter sp. (strain 638) protein is Sulfurtransferase TusD.